Reading from the N-terminus, the 235-residue chain is DnaA regulatory inactivator Hda (235 aa).

The protein belongs to the DnaA family. HdA subfamily. As to quaternary structure, the active form seems to be an ADP-bound monomer. Forms the RIDA complex (regulatory inactivation of DnaA) of ATP-DnaA, ADP-Hda and the DNA-loaded beta sliding clamp (dnaN).

Its function is as follows. Mediates the interaction of DNA replication initiator protein DnaA with DNA polymerase subunit beta sliding clamp (dnaN). Stimulates hydrolysis of ATP-DnaA to ADP-DnaA, rendering DnaA inactive for reinitiation, a process called regulatory inhibition of DnaA or RIDA. This Yersinia pestis bv. Antiqua (strain Antiqua) protein is DnaA regulatory inactivator Hda.